A 109-amino-acid chain; its full sequence is Putative pterin-4-alpha-carbinolamine dehydratase (109 aa).

It belongs to the pterin-4-alpha-carbinolamine dehydratase family.

The enzyme catalyses (4aS,6R)-4a-hydroxy-L-erythro-5,6,7,8-tetrahydrobiopterin = (6R)-L-erythro-6,7-dihydrobiopterin + H2O. This is Putative pterin-4-alpha-carbinolamine dehydratase from Halorhodospira halophila (strain DSM 244 / SL1) (Ectothiorhodospira halophila (strain DSM 244 / SL1)).